We begin with the raw amino-acid sequence, 977 residues long: Receptor-like protein kinase 7 (977 aa).

Positions 1–28 are cleaved as a signal peptide; sequence MAPSLRNFNFFHRFSTFLVFSLFSVVSS. Over 29–608 the chain is Extracellular; it reads DDLQVLLKLK…NPSRSHGDTR (580 aa). 3 LRR repeats span residues 71 to 95, 96 to 119, and 121 to 145; these read RGNV…SVCE, IQSL…DLKN, and TSLK…SLNQ. Asn-73 and Asn-119 each carry an N-linked (GlcNAc...) asparagine glycan. N-linked (GlcNAc...) asparagine glycans are attached at residues Asn-152 and Asn-167. LRR repeat units lie at residues 168 to 194, 195 to 218, 219 to 242, 244 to 265, 267 to 289, 290 to 312, 313 to 337, 339 to 361, 362 to 385, 386 to 409, 411 to 433, 434 to 457, 458 to 481, 482 to 505, 507 to 529, 530 to 553, and 555 to 578; these read ATSL…VVSL, KKLS…IGDL, TELR…ISKL, NLWQ…GFGN, KNLT…LRSL, TNLV…EFGE, FKDL…LGSL, DFDF…MCKN, GKMK…YANC, LTLQ…LWGL, KLEI…IKNG, KMLG…IGDT, ESLT…IGKL, KGLS…IGSC, MLSD…LGSL, PTLN…LSSL, and LSLL…SYNG. N-linked (GlcNAc...) asparagine glycosylation is present at Asn-204. N-linked (GlcNAc...) asparagine glycans are attached at residues Asn-252 and Asn-268. Asn-318 carries N-linked (GlcNAc...) asparagine glycosylation. N-linked (GlcNAc...) asparagine glycosylation is found at Asn-373 and Asn-399. Asn-536 and Asn-577 each carry an N-linked (GlcNAc...) asparagine glycan. Residues 609–629 form a helical membrane-spanning segment; sequence VFVLCIVFGLLILLASLVFFL. At 630–977 the chain is on the cytoplasmic side; sequence YLKKTEKKEG…ESDVKVKEIS (348 aa). Residues 666–959 enclose the Protein kinase domain; it reads IKEENLIGRG…QMIEDAEPCR (294 aa). Residues 672–680 and Lys-694 contribute to the ATP site; that span reads IGRGGCGDV. Asp-805 acts as the Proton acceptor in catalysis.

The protein belongs to the protein kinase superfamily. Ser/Thr protein kinase family. In terms of assembly, interacts with PIP1. Expressed in roots, stems and dry seeds. Expressed at junctions between organs, such as the insertion zones of stamens, petals and sepals, the transition zones of floral stem and pedicel, pedicel and silique, and floral stem and cauline leaves.

Its subcellular location is the membrane. It carries out the reaction L-seryl-[protein] + ATP = O-phospho-L-seryl-[protein] + ADP + H(+). The catalysed reaction is L-threonyl-[protein] + ATP = O-phospho-L-threonyl-[protein] + ADP + H(+). Its function is as follows. Plays a role in pattern-triggered immunity (PTI) signaling induced by pathogen-associated molecular patterns (PAMPs). Acts as a receptor for PIP1 defense peptide. PIP1 is an endogenous secreted peptide that acts as elicitor of immune response and positive regulator of defense response. Involved in the control of seed germination speed, in tolerance to oxidative stress and in maintaining seed longevity. In Arabidopsis thaliana (Mouse-ear cress), this protein is Receptor-like protein kinase 7.